Reading from the N-terminus, the 414-residue chain is Ribulose bisphosphate carboxylase large chain (414 aa).

The substrate site is built by Asn-101 and Thr-151. Lys-153 acts as the Proton acceptor in catalysis. Residue Lys-155 participates in substrate binding. 3 residues coordinate Mg(2+): Lys-179, Asp-181, and Glu-182. Lys-179 is subject to N6-carboxylysine. The Proton acceptor role is filled by His-272. Residues Arg-273, His-305, and Ser-357 each contribute to the substrate site.

Belongs to the RuBisCO large chain family. Type I subfamily. Heterohexadecamer of 8 large chains and 8 small chains; disulfide-linked. The disulfide link is formed within the large subunit homodimers. It depends on Mg(2+) as a cofactor. The disulfide bond which can form in the large chain dimeric partners within the hexadecamer appears to be associated with oxidative stress and protein turnover.

It is found in the plastid. The protein localises to the chloroplast. The enzyme catalyses 2 (2R)-3-phosphoglycerate + 2 H(+) = D-ribulose 1,5-bisphosphate + CO2 + H2O. It catalyses the reaction D-ribulose 1,5-bisphosphate + O2 = 2-phosphoglycolate + (2R)-3-phosphoglycerate + 2 H(+). Functionally, ruBisCO catalyzes two reactions: the carboxylation of D-ribulose 1,5-bisphosphate, the primary event in carbon dioxide fixation, as well as the oxidative fragmentation of the pentose substrate in the photorespiration process. Both reactions occur simultaneously and in competition at the same active site. This chain is Ribulose bisphosphate carboxylase large chain (rbcL), found in Onychium japonicum (Japanese claw fern).